A 438-amino-acid chain; its full sequence is tRNA wybutosine-synthesizing protein 2 homolog (438 aa).

Residues Ser-209, Lys-216, Glu-256, and 284–285 (DN) contribute to the S-adenosyl-L-methionine site.

This sequence belongs to the class I-like SAM-binding methyltransferase superfamily. TRM5/TYW2 family.

The catalysed reaction is 4-demethylwyosine(37) in tRNA(Phe) + S-adenosyl-L-methionine = 4-demethyl-7-[(3S)-3-amino-3-carboxypropyl]wyosine(37) in tRNA(Phe) + S-methyl-5'-thioadenosine + H(+). Its pathway is tRNA modification; wybutosine-tRNA(Phe) biosynthesis. Its function is as follows. S-adenosyl-L-methionine-dependent transferase that acts as a component of the wybutosine biosynthesis pathway. Wybutosine is a hyper modified guanosine with a tricyclic base found at the 3'-position adjacent to the anticodon of eukaryotic phenylalanine tRNA. Catalyzes the transfer of the alpha-amino-alpha-carboxypropyl (acp) group from S-adenosyl-L-methionine to the C-7 position of 4-demethylwyosine (imG-14) to produce wybutosine-86. This Bos taurus (Bovine) protein is tRNA wybutosine-synthesizing protein 2 homolog (TRMT12).